Reading from the N-terminus, the 1549-residue chain is FERM and PDZ domain-containing protein 1 (1549 aa).

A PDZ domain is found at 57–135; that stretch reads TVTLDKDVLL…ALSITVVRCT (79 aa). In terms of domain architecture, FERM spans 181–496; sequence NVLKVYLENG…GYYRLFVDPA (316 aa). Disordered stretches follow at residues 554-618, 717-738, 775-834, 913-1046, 1097-1174, 1231-1257, and 1321-1347; these read AREE…DDLD, SHLSDSGSESTASRQGAAPPQW, YDAA…YAKS, STNP…RSEI, SLDS…EAQE, LSPCQEEPRSADSGHGSPAESKGDDSP, and PETEEEDGDPQTHPAAPLTSPPSAGSQ. The span at 717–730 shows a compositional bias: polar residues; the sequence is SHLSDSGSESTASR. Residues 924–931 form an important for interaction with GPSM2 region; sequence EPETMETK. A compositionally biased stretch (polar residues) spans 950–961; it reads PSNTENPVTTDG. The segment covering 962-980 has biased composition (low complexity); it reads SSASIPHSPHHSNPGSSSP. Over residues 1117–1130 the composition is skewed to basic and acidic residues; sequence SGKDLGDSKGDRLD.

In terms of assembly, interacts with GPSM1. Interacts with GPSM2.

The protein localises to the cytoplasm. The protein resides in the cytosol. It is found in the cell membrane. Stabilizes membrane-bound GPSM1, and thereby promotes its interaction with GNAI1. The protein is FERM and PDZ domain-containing protein 1 (Frmpd1) of Mus musculus (Mouse).